The following is a 200-amino-acid chain: MIKLIVGLGNPGAEYTATRHNAGFWLIDQLAREAGTTLRDERRFHGFYAKARLYGEEVHLLEPMTYMNRSGQSVVALAHFFKILPDQILVAHDELDLPPGTVKLKLGGGSGGHNGLKDISAHLSTQQYWRLRIGIGHPRDLIPDSARAGAKPDVANFVLKPPRKEEQDLIDASIERALAVMPVVVKGELERAMMQLHRNP.

Tyr-15 lines the tRNA pocket. His-20 acts as the Proton acceptor in catalysis. The tRNA site is built by Tyr-66, Asn-68, and Asn-114.

Belongs to the PTH family. Monomer.

It is found in the cytoplasm. It carries out the reaction an N-acyl-L-alpha-aminoacyl-tRNA + H2O = an N-acyl-L-amino acid + a tRNA + H(+). Functionally, hydrolyzes ribosome-free peptidyl-tRNAs (with 1 or more amino acids incorporated), which drop off the ribosome during protein synthesis, or as a result of ribosome stalling. Its function is as follows. Catalyzes the release of premature peptidyl moieties from peptidyl-tRNA molecules trapped in stalled 50S ribosomal subunits, and thus maintains levels of free tRNAs and 50S ribosomes. The chain is Peptidyl-tRNA hydrolase from Paraburkholderia phymatum (strain DSM 17167 / CIP 108236 / LMG 21445 / STM815) (Burkholderia phymatum).